The sequence spans 246 residues: Allergin-1 (246 aa).

The N-terminal stretch at 1-33 is a signal peptide; it reads MGDGDSPMCLSAVSFKGIRCWLDKLLLWALTIS. The Extracellular segment spans residues 34–150; that stretch reads ITLQNAAVDC…DESCPSCRLS (117 aa). The region spanning 52–131 is the Ig-like C2-type domain; the sequence is PSPNLNSSMN…VNVSNLMKYS (80 aa). Asparagine 68 carries N-linked (GlcNAc...) asparagine glycosylation. Residues cysteine 73 and cysteine 120 are joined by a disulfide bond. The helical transmembrane segment at 151–171 threads the bilayer; that stretch reads LLLPGLLLGILVIVLVLAYLI. At 172–246 the chain is on the cytoplasmic side; the sequence is HLKYKKGKKT…ADYIYSELTH (75 aa). 2 short sequence motifs (ITIM motif) span residues 214-219 and 239-244; these read IHYATP and YIYSEL. Residues tyrosine 216 and tyrosine 241 each carry the phosphotyrosine modification.

As to quaternary structure, monomer. Interacts (tyrosine-phosphorylated) with PTPN6, PTPN11 and INPP5D. N-glycosylated. In terms of tissue distribution, expressed in myeloid cells (dendritic cells, macrophages and neutrophils but not in T-cells, B-cells or natural killer cells) and mast cells (at protein level).

Its subcellular location is the cell membrane. It localises to the secreted. In terms of biological role, immunoglobulin-like receptor which plays an inhibitory role in degranulation of mast cells. Negatively regulates IgE-mediated mast cell activation and suppresses the type I immediate hypersensitivity reaction. The protein is Allergin-1 (Milr1) of Mus musculus (Mouse).